The primary structure comprises 409 residues: LL-diaminopimelate aminotransferase (409 aa).

Substrate contacts are provided by Y15 and G42. Pyridoxal 5'-phosphate-binding positions include Y72, 108-109 (AK), Y132, N186, Y217, and 245-247 (SFS). Substrate-binding residues include K109, Y132, and N186. K248 is modified (N6-(pyridoxal phosphate)lysine). Pyridoxal 5'-phosphate is bound by residues R256 and N291. Substrate is bound by residues N291 and R385.

It belongs to the class-I pyridoxal-phosphate-dependent aminotransferase family. LL-diaminopimelate aminotransferase subfamily. As to quaternary structure, homodimer. Pyridoxal 5'-phosphate is required as a cofactor.

The enzyme catalyses (2S,6S)-2,6-diaminopimelate + 2-oxoglutarate = (S)-2,3,4,5-tetrahydrodipicolinate + L-glutamate + H2O + H(+). It participates in amino-acid biosynthesis; L-lysine biosynthesis via DAP pathway; LL-2,6-diaminopimelate from (S)-tetrahydrodipicolinate (aminotransferase route): step 1/1. Involved in the synthesis of meso-diaminopimelate (m-DAP or DL-DAP), required for both lysine and peptidoglycan biosynthesis. Catalyzes the direct conversion of tetrahydrodipicolinate to LL-diaminopimelate. This chain is LL-diaminopimelate aminotransferase, found in Desulfosudis oleivorans (strain DSM 6200 / JCM 39069 / Hxd3) (Desulfococcus oleovorans).